We begin with the raw amino-acid sequence, 252 residues long: Zinc import ATP-binding protein ZnuC (252 aa).

One can recognise an ABC transporter domain in the interval valine 5–arginine 220. Position 37 to 44 (glycine 37 to serine 44) interacts with ATP.

Belongs to the ABC transporter superfamily. Zinc importer (TC 3.A.1.15.5) family. In terms of assembly, the complex is composed of two ATP-binding proteins (ZnuC), two transmembrane proteins (ZnuB) and a solute-binding protein (ZnuA).

It localises to the cell inner membrane. The enzyme catalyses Zn(2+)(out) + ATP(in) + H2O(in) = Zn(2+)(in) + ADP(in) + phosphate(in) + H(+)(in). Its function is as follows. Part of the ABC transporter complex ZnuABC involved in zinc import. Responsible for energy coupling to the transport system. This Yersinia enterocolitica serotype O:8 / biotype 1B (strain NCTC 13174 / 8081) protein is Zinc import ATP-binding protein ZnuC.